Here is a 421-residue protein sequence, read N- to C-terminus: Histidine--tRNA ligase (421 aa).

The protein belongs to the class-II aminoacyl-tRNA synthetase family. In terms of assembly, homodimer.

The protein resides in the cytoplasm. The catalysed reaction is tRNA(His) + L-histidine + ATP = L-histidyl-tRNA(His) + AMP + diphosphate + H(+). The protein is Histidine--tRNA ligase of Francisella tularensis subsp. tularensis (strain SCHU S4 / Schu 4).